Reading from the N-terminus, the 645-residue chain is MRAIHCLEERLEQFHTEKCYESYQIFGAHLAVENGVHGVRFTVWAPRAKNLSVVGDFNEWNEKQHRMQKVTEAGIWSLFIPQIEEKEIYKYAIETINGEVILKADPYATYAEVRPNTASVILDIEGYEWNDKNWFRKKKKKSVYKEAMAIYELHFGSWKKKEDGSLYSYREMAEELIPYMANHHFTHIEIMPLVEHPYDRSWGYQGTGYYAVTSRFGTPHDFMYFVDECHKYGIGVILDWVPGHFCKDAHGLYLFDGTPTYEYRDLDVQENRVWGTANFDLGKREVRNFLISNALFWMKYYHIDGFRVDAVANMLYWEKEGKAQSNEYAVSFLRELNEAVFAEDGEFLMTAEDSTAWPLVTAPTYEGGLGFNYKWNMGWMNDVLKYMECAPEYRKYIHEKMTFSLLYAYSENFILPLSHDEVVHGKKSLLNKMPGNYWEKFAQLRLLYGYFFTHPGKKLLFMGGEFGQFDEWKDLEDLDWNLHEFEMHRHMHDYFKELIALYKRSKPLWQLDYSHEGFQWIDADNKEQSIFSFIRKGDREDDVLIVICNFTSIVYEKYKVGVPEFQYYNEILNSDAIAYGGSGRINKKRLKSISQPYHNQTAHVEITIPPFGVSILRPVKMRKGSKKQDGKKAELRSNATSRRKR.

Residue D309 is the Nucleophile of the active site. E352 acts as the Proton donor in catalysis. The disordered stretch occupies residues 621–645 (MRKGSKKQDGKKAELRSNATSRRKR). The span at 626–635 (KKQDGKKAEL) shows a compositional bias: basic and acidic residues.

It belongs to the glycosyl hydrolase 13 family. GlgB subfamily. Monomer.

The catalysed reaction is Transfers a segment of a (1-&gt;4)-alpha-D-glucan chain to a primary hydroxy group in a similar glucan chain.. Its pathway is glycan biosynthesis; glycogen biosynthesis. Its function is as follows. Catalyzes the formation of the alpha-1,6-glucosidic linkages in glycogen by scission of a 1,4-alpha-linked oligosaccharide from growing alpha-1,4-glucan chains and the subsequent attachment of the oligosaccharide to the alpha-1,6 position. This chain is 1,4-alpha-glucan branching enzyme GlgB, found in Bacillus cytotoxicus (strain DSM 22905 / CIP 110041 / 391-98 / NVH 391-98).